A 3961-amino-acid polypeptide reads, in one-letter code: Replicase polyprotein 1ab (3961 aa).

A C4-type; atypical zinc finger spans residues 8-28 (CTCTPNARVFVAEGQVYCTRC). One can recognise a Peptidase C31 domain in the interval 69 to 180 (ECSPAGACWL…EDFCPFECAM (112 aa)). The PCP1-alpha stretch occupies residues 69 to 182 (ECSPAGACWL…FCPFECAMAT (114 aa)). Catalysis depends on for Nsp1-alpha papain-like cysteine proteinase activity residues Cys76 and His146. The interval 199 to 200 (IS) is important for host EIF2AK2 inhibition. The segment at 263–382 (DTVPEGNCWW…IFRFGSHKWY (120 aa)) is PCP1-beta. Positions 263 to 383 (DTVPEGNCWW…FRFGSHKWYG (121 aa)) constitute a Peptidase C32 domain. Active-site for Nsp1-beta papain-like cysteine proteinase activity residues include Cys270 and His339. The interval 426–513 (LKHYSPPAEG…GEHWTVTVTP (88 aa)) is OTU-like. Residues 428–535 (HYSPPAEGNC…QGCCEHKGGL (108 aa)) enclose the Peptidase C33 domain. Active-site for Nsp2 cysteine proteinase activity residues include Cys437 and His506. Disordered stretches follow at residues 809–862 (RWTP…NSWE), 898–979 (ATPL…GVLG), and 1153–1213 (NQEP…GGGP). Positions 810–819 (WTPPPPPPKV) are enriched in pro residues. The next 8 helical transmembrane spans lie at 1266–1286 (LCLFLCYSYPAFGIAPLLGVF), 1296–1316 (GVFGCWLAFAVGLFKPVSDPV), 1345–1365 (SLVVGPVGLGLAILGRLLGGA), 1368–1388 (IWHFLLRLGIVADCILAGAYV), 1583–1603 (LMAALHVACSMALHMLTGIYV), 1650–1670 (ALVAGFGIQEIALVVLIFVSI), 1685–1705 (CILLAIASYVWVPLTWLLCVF), and 1719–1739 (ILWLVFFLISVNMPSGILAMV). An HD1 region spans residues 1266 to 1388 (LCLFLCYSYP…ADCILAGAYV (123 aa)). Positions 1583–1745 (LMAALHVACS…LAMVLLVSLW (163 aa)) are HD2. A Peptidase S32 domain is found at 1810 to 2013 (GAFRTRKPSL…ALLAAKPELE (204 aa)). Active-site charge relay system; for 3C-like serine proteinase activity residues include His1848, Asp1873, and Ser1927. 5 helical membrane-spanning segments follow: residues 2012–2032 (LEGGLSTVQLLCVFFLLWRMM), 2060–2080 (FSFGMFVLSWLTPWSAQILMI), 2092–2112 (WSLAFFSLGAVTGFVADLAAT), 2137–2157 (SPVPVITCGVVHLLAIILYLF), and 2164–2184 (QILVGDGVFSAAFFLRYFAEG). The segment at 2036 to 2157 (WTPLVAVSFF…HLLAIILYLF (122 aa)) is HD3. Positions 2329–2358 (PTPTPPPAPVPIPLPPKVLENGPNAWGDED) are disordered. Residues 2330–2344 (TPTPPPAPVPIPLPP) are compositionally biased toward pro residues. The NiRAN domain maps to 2488–2651 (IIDKLQGLTK…LPYKLYPVRG (164 aa)). Residues 2890–3024 (GRCLEADLAS…YAESPTMPNY (135 aa)) enclose the RdRp catalytic domain. The AV ZBD domain occupies 3145–3208 (GKKSRVCGYC…SPVGKGTSPL (64 aa)). Residues Cys3151, Cys3154, Cys3164, Cys3169, His3172, His3174, His3176, His3178, Cys3185, His3187, Cys3194, and Cys3197 each contribute to the Zn(2+) site. A (+)RNA virus helicase ATP-binding domain is found at 3265-3417 (ASTALLPTCK…VFDIMPQTQL (153 aa)). Position 3298–3305 (3298–3305 (GKTYWLLQ)) interacts with ATP. The 129-residue stretch at 3418–3546 (KTIWRFGQNI…AVHRDGQLIV (129 aa)) folds into the (+)RNA virus helicase C-terminal domain. Residues 3585–3681 (EGSSSPLPKV…LTKFVKGEAQ (97 aa)) form the AV-Nsp11N/CoV-Nsp15M domain. The NendoU domain occupies 3683–3805 (LPETVFSTGR…MVWRDKTAYF (123 aa)). Catalysis depends on residues His3714, His3729, and Lys3758.

It belongs to the arteriviridae polyprotein family. Nsp1-alpha papain-like: Interacts with host RNF31. In terms of assembly, interacts with host EIF2AK2; this interaction occurs in host stress granules and leads to EIF2AK2 inhibition. Interacts with host G3BP1; this interaction probably plays a role in Nsp1-beta-mediated inhibition of host EIF2AK2. As to quaternary structure, interacts with host DDX18; this interaction redistributes host DDX18 to the cytoplasm. Interacts with host IFITM1. In terms of assembly, interacts with host DDX5. As to quaternary structure, interacts with host OTULIN. Interacts with host LGALS3. Post-translationally, specific enzymatic cleavages in vivo by its own proteases yield mature proteins. Nsp1 is autocleaved into two subunits, Nsp1-alpha and Nsp1-beta. There are two alternative pathways for processing. Either nsp4-5 is cleaved, which represents the major pathway or the nsp5-6 and nsp6-7 are processed, which represents the minor pathway. The major pathway occurs when nsp2 acts as a cofactor for nsp4.

The protein resides in the host nucleus. It is found in the host cytoplasm. The protein localises to the host membrane. It localises to the host endoplasmic reticulum. Its subcellular location is the host perinuclear region. The catalysed reaction is RNA(n) + a ribonucleoside 5'-triphosphate = RNA(n+1) + diphosphate. It carries out the reaction ATP + H2O = ADP + phosphate + H(+). It catalyses the reaction Thiol-dependent hydrolysis of ester, thioester, amide, peptide and isopeptide bonds formed by the C-terminal Gly of ubiquitin (a 76-residue protein attached to proteins as an intracellular targeting signal).. The enzyme catalyses uridylyl-uridylyl-ribonucleotide-RNA = a 3'-end uridylyl-2',3'-cyclophospho-uridine-RNA + a 5'-end dephospho-ribonucleoside-RNA. Functionally, contains the activities necessary for the transcription of negative stranded RNA, leader RNA, subgenomic mRNAs and progeny virion RNA as well as proteinases responsible for the cleavage of the polyprotein into functional products. Inhibits host IFN-beta production. Plays a role in the degradation of the host transcriptional activator CREBBP protein. The degradation of host CREBBP which is a key component of the IFN enhanceosome is likely responsible for the inhibition of interferon mediated by Nsp1-alpha. Also participates in the inhibition of host NF-kappa-B activation by counteracting LUBAC-dependent induction of NF-kappa-B. Reduces host NEMO ubiquitination by blocking the interaction between the two LUBAC complex components RNF31 and SHARPIN. Its function is as follows. Plays a role in blocking host mRNA nuclear export to the cytoplasm and subversion of host protein synthesis. Additionally, inhibits the interferon-activated JAK/STAT signal transduction by mediating the ubiquitination and subsequent proteasomal degradation of host KPNA1. Repurposes the host antiviral stress granules into a proviral platform to counteract the EIF2AK2/PKR restriction, thereby regulating the host inflammatory response. In terms of biological role, multifunctional protein that acts as a viral protease and as a viral antagonist of host immune response. Cleaves the nsp2/nsp3 site in the viral polyprotein. Displays deubiquitinating activity that cleaves both ubiquitinated and ISGylated products and therefore inhibits ubiquitin and ISG15-dependent host innate immunity. Also deubiquinates host NFKBIA, thereby interfering with NFKBIA degradation and impairing subsequent NF-kappa-B activation. Functionally, plays a role in the inhibition of the immune response by interacting with host IFITM1. This interaction leads to the proteasomal degradation of the IFN-induced antiviral protein IFITM1. Cleaves the majority of cleavage sites present in the C-terminus of the polyprotein. Triggers host apoptosis through caspase-3, -8, and -9 activations. Subverts host innate immune responses through its protease activity. Targets the NF-kappa-B essential modulator NEMO and mediates its cleavage. Blocks host interferon beta induction and downstream signaling by cleaving mitochondrial MAVS, dislodging it from the mitochondria. Impairs host defense by cleaving host mRNA-decapping enzyme DCP1A to attenuate its antiviral activity. Its function is as follows. Plays a role in the initial induction of autophagosomes from host endoplasmic reticulum. In terms of biological role, plays a role in the inhibition of host STAT3 signaling pathway by inducing the degradation of STAT3. Functionally, responsible for replication and transcription of the viral RNA genome. Displays RNA and DNA duplex-unwinding activities with 5' to 3' polarity. Its function is as follows. Plays a role in viral transcription/replication and prevents the simultaneous activation of host cell dsRNA sensors, such as MDA5/IFIH1, OAS, PKR and NLRP3 inflammasome. Acts by degrading the 5'-polyuridines generated during replication of the poly(A) region of viral genomic and subgenomic RNAs. Catalyzes a two-step reaction in which a 2'3'-cyclic phosphate (2'3'-cP) is first generated by 2'-O transesterification, which is then hydrolyzed to a 3'-phosphate (3'-P). If not degraded, poly(U) RNA would hybridize with poly(A) RNA tails and activate host dsRNA sensors. Also plays a role in the inhibition of host type I interferon production by recruiting host OTULIN to promote removal of linear ubiquitination targeting host NEMO. This chain is Replicase polyprotein 1ab (rep), found in Porcine reproductive and respiratory syndrome virus (strain 16244B) (PRRSV).